A 385-amino-acid chain; its full sequence is Protein pelota homolog (385 aa).

A Glycyl lysine isopeptide (Lys-Gly) (interchain with G-Cter in SUMO2) cross-link involves residue Lys-162. Phosphoserine occurs at positions 374, 380, 381, and 382.

This sequence belongs to the eukaryotic release factor 1 family. Pelota subfamily. As to quaternary structure, component of the Pelota-HBS1L complex, also named Dom34-Hbs1 complex, composed of PELO and HBS1L. Interacts with PINK1. Interacts with ABCE1. Interacts with CNOT4. A divalent metal cation is required as a cofactor.

It localises to the cytoplasm. Component of the Pelota-HBS1L complex, a complex that recognizes stalled ribosomes and triggers the No-Go Decay (NGD) pathway. In the Pelota-HBS1L complex, PELO recognizes ribosomes stalled at the 3' end of an mRNA and engages stalled ribosomes by destabilizing mRNA in the mRNA channel. Following mRNA extraction from stalled ribosomes by the SKI complex, the Pelota-HBS1L complex promotes recruitment of ABCE1, which drives the disassembly of stalled ribosomes, followed by degradation of damaged mRNAs as part of the NGD pathway. As part of the PINK1-regulated signaling, upon mitochondrial damage is recruited to the ribosome/mRNA-ribonucleoprotein complex associated to mitochondrial outer membrane thereby enabling the recruitment of autophagy receptors and induction of mitophagy. This Bos taurus (Bovine) protein is Protein pelota homolog (PELO).